Here is a 106-residue protein sequence, read N- to C-terminus: Small ribosomal subunit protein uS10 (106 aa).

The protein belongs to the universal ribosomal protein uS10 family. Part of the 30S ribosomal subunit.

Functionally, involved in the binding of tRNA to the ribosomes. The sequence is that of Small ribosomal subunit protein uS10 from Pyrobaculum islandicum (strain DSM 4184 / JCM 9189 / GEO3).